A 137-amino-acid chain; its full sequence is MLQPKRTKFRKQMTGHNRGLALRGSKVSFGEFALKSVARGRLTARQIESARRALTRHVKRGGKIWIRVFPDKPVTKKPLEVRMGKGKGNVEYWVAQIQPGKVLYEIEGVTEELAREAFALAAAKLPLATSFVKRTVM.

Belongs to the universal ribosomal protein uL16 family. Part of the 50S ribosomal subunit.

In terms of biological role, binds 23S rRNA and is also seen to make contacts with the A and possibly P site tRNAs. This Pseudomonas syringae pv. tomato (strain ATCC BAA-871 / DC3000) protein is Large ribosomal subunit protein uL16.